Here is a 248-residue protein sequence, read N- to C-terminus: 2,3-bisphosphoglycerate-dependent phosphoglycerate mutase (248 aa).

Substrate is bound by residues 8 to 15, 21 to 22, arginine 60, 87 to 90, lysine 98, 114 to 115, and 183 to 184; these read RHGESTWN, TG, ERHY, RR, and GN. Histidine 9 acts as the Tele-phosphohistidine intermediate in catalysis. Glutamate 87 functions as the Proton donor/acceptor in the catalytic mechanism.

It belongs to the phosphoglycerate mutase family. BPG-dependent PGAM subfamily. Homodimer.

It catalyses the reaction (2R)-2-phosphoglycerate = (2R)-3-phosphoglycerate. Its pathway is carbohydrate degradation; glycolysis; pyruvate from D-glyceraldehyde 3-phosphate: step 3/5. Its function is as follows. Catalyzes the interconversion of 2-phosphoglycerate and 3-phosphoglycerate. This is 2,3-bisphosphoglycerate-dependent phosphoglycerate mutase from Burkholderia ambifaria (strain ATCC BAA-244 / DSM 16087 / CCUG 44356 / LMG 19182 / AMMD) (Burkholderia cepacia (strain AMMD)).